Reading from the N-terminus, the 123-residue chain is UPF0738 protein BcerKBAB4_1107 (123 aa).

It belongs to the UPF0738 family.

This is UPF0738 protein BcerKBAB4_1107 from Bacillus mycoides (strain KBAB4) (Bacillus weihenstephanensis).